Consider the following 2057-residue polypeptide: Protein TIC 214 (2057 aa).

Helical transmembrane passes span 13-33 (KIINSVLAAGLYYGFLSAFSI), 62-82 (LIMGQILLFISIYYKPFHIAL), 158-178 (LFVTSSFFAWFIGQILVCEFF), and 206-226 (SDYFHFFFVILFFMMSLHSFG). The stretch at 248 to 340 (LILKGTDEEE…RVIQEKERKS (93 aa)) forms a coiled coil. A compositionally biased stretch (basic residues) spans 288–302 (NHLKKKKDRQKKQGT). 5 disordered regions span residues 288 to 316 (NHLKKKKDRQKKQGTRGHSDKEFHSNSNT), 614 to 807 (ETHT…EEKG), 890 to 910 (DEQTKREEKPKRESKKKNDRV), 1597 to 1634 (EEEEINPEEEINPEEEINPEEEINPSSNQKTPIGTNND), and 1724 to 1817 (KKKN…KSLS). Composition is skewed to basic and acidic residues over residues 621-657 (ATDKETKPNASKETDTVNKETKPNASKETDTIDKETK) and 665-702 (NTVDKETKTNASKETDTVDKETKPNASKETDTIDKETK). The span at 704–713 (NASKETNTVN) shows a compositional bias: polar residues. Composition is skewed to basic and acidic residues over residues 714-807 (KETK…EEKG) and 891-900 (EQTKREEKPK). Residues 1597 to 1619 (EEEEINPEEEINPEEEINPEEEI) are compositionally biased toward acidic residues. Over residues 1622-1634 (SSNQKTPIGTNND) the composition is skewed to polar residues. Basic and acidic residues predominate over residues 1753–1817 (TNSEKKSKTN…ETDSEKKSLS (65 aa)).

The protein belongs to the TIC214 family. As to quaternary structure, part of the Tic complex.

Its subcellular location is the plastid. The protein resides in the chloroplast inner membrane. In terms of biological role, involved in protein precursor import into chloroplasts. May be part of an intermediate translocation complex acting as a protein-conducting channel at the inner envelope. This is Protein TIC 214 from Ipomoea purpurea (Common morning glory).